The following is a 617-amino-acid chain: Chitin elicitor receptor kinase 1 (617 aa).

Residues 1–23 (MKLKISLIAPILLLFSFFFAVES) form the signal peptide. Residues 24 to 232 (KCRTSCPLAL…KSSKQDGVGA (209 aa)) lie on the Extracellular side of the membrane. Disulfide bonds link Cys-25/Cys-93, Cys-29/Cys-155, and Cys-91/Cys-153. N-linked (GlcNAc...) asparagine glycosylation is found at Asn-40, Asn-52, and Asn-102. Positions 46-74 (VINQNLNSSIAPYDQINFDPILRYNSNIK) constitute a LysM 1; degenerate domain. The LysM 2; degenerate domain occupies 108–140 (RQEDTYERVAISNYANLTTMESLQARNPFPATN). 109–115 (QEDTYER) contacts chitin. N-linked (GlcNAc...) asparagine glycosylation is present at Asn-123. Residue 137-143 (PATNIPL) participates in chitin binding. N-linked (GlcNAc...) asparagine glycosylation occurs at Asn-152. The LysM 3 domain maps to 168–211 (VTYPLRPEDSLSSIARSSGVSADILQRYNPGVNFNSGNGIVYVP). The helical transmembrane segment at 233 to 253 (GVIAGIVIGVIVALLLILFIV) threads the bilayer. Residues 254-617 (YYAYRKNKSK…EDLVSLMSGR (364 aa)) lie on the Cytoplasmic side of the membrane. Phosphoserine is present on residues Ser-266, Ser-268, and Ser-274. Positions 322–594 (FNLSFKIGQG…YIVVALSTLF (273 aa)) constitute a Protein kinase domain. Residues 328-336 (IGQGGFGAV) and Lys-349 contribute to the ATP site. Residue Tyr-390 is modified to Phosphotyrosine. Asp-441 acts as the Proton acceptor in catalysis. Residues Thr-479 and Thr-519 each carry the phosphothreonine modification.

Belongs to the protein kinase superfamily. Ser/Thr protein kinase family. Forms homodimers and homooligomers. Homodimerization is required to trigger plant defenses. Binds to chitin, chitosan and chito-oligomer oligosaccharide elicitors. Interaction with chitin octamer (NAG(8)) promotes homodimerization while shorter chitin oligomers inhibit homodimerization. Interacts with Pseudomonas syringae hopAB2/avrPtoB. Interacts (preferentially when unphosphorylated) with PBL27 at the plasma membrane. Binds to IOS1. Autophosphorylated. Autophosphorylation is induced by chitin and derivatives. In terms of processing, ubiquitinated and targeted to the proteasome by hopAB2/avrPtoB of Pseudomonas syringae pv. tomato DC3000. Expressed ubiquitously, with lowest expression in pollen.

It localises to the cell membrane. The catalysed reaction is L-seryl-[protein] + ATP = O-phospho-L-seryl-[protein] + ADP + H(+). It catalyses the reaction L-threonyl-[protein] + ATP = O-phospho-L-threonyl-[protein] + ADP + H(+). Activated by chitin-mediated homodimerization. Functionally, lysin motif (LysM) receptor kinase that functions as a cell surface receptor in chitin elicitor (chitooligosaccharides) signaling leading to innate immunity toward both biotic and abiotic stresses (e.g. tolerance to salinity, heavy-metal stresses, and Botrytis cinerea infection). Recognizes microbe-derived N-acetylglucosamine (NAG)-containing ligands. Involved in the resistance to pathogenic fungi Alternaria brassicicola and Erysiphe cichoracearum, probably by sensing microbe-associated molecular patterns (MAMP) and pathogen-associated molecular patterns (PAMP). Plays an essential role in detecting peptidoglycans (e.g. PGNs) and restricting bacterial growth. Target of the bacterial type III effector E3-ligase protein hopAB2/avrPtoB of Pseudomonas syringae pv. tomato DC3000 that mediates ubiquitination and subsequent proteolysis, thus blocking all defense responses by suppressing PAMP-triggered immunity (PTI). Mediates chitin-induced phosphorylation of PBL27. This is Chitin elicitor receptor kinase 1 (CERK1) from Arabidopsis thaliana (Mouse-ear cress).